A 289-amino-acid chain; its full sequence is Type II methyltransferase M.MjaIII (289 aa).

S-adenosyl-L-methionine contacts are provided by tryptophan 9, lysine 13, aspartate 63, and aspartate 199.

The protein belongs to the N(4)/N(6)-methyltransferase family.

The enzyme catalyses a 2'-deoxyadenosine in DNA + S-adenosyl-L-methionine = an N(6)-methyl-2'-deoxyadenosine in DNA + S-adenosyl-L-homocysteine + H(+). Functionally, an alpha subtype methylase that recognizes the double-stranded sequence 5'-GATC-3', methylates A-2 on both strands, and protects the DNA from cleavage by the MjaIII endonuclease. This is Type II methyltransferase M.MjaIII (mjaIIIM) from Methanocaldococcus jannaschii (strain ATCC 43067 / DSM 2661 / JAL-1 / JCM 10045 / NBRC 100440) (Methanococcus jannaschii).